The primary structure comprises 436 residues: GTPase Obg (436 aa).

Residues 2–160 (SMFLDTAKIQ…RELLLELKVL (159 aa)) enclose the Obg domain. The 178-residue stretch at 161-338 (ADVGLVGFPS…LLDATAELLD (178 aa)) folds into the OBG-type G domain. GTP is bound by residues 167–174 (GFPSVGKS), 192–196 (FTTIV), 214–217 (DLPG), 284–287 (NKMD), and 319–321 (SSL). Mg(2+) contacts are provided by S174 and T194. The 79-residue stretch at 358–436 (GFDEEAPAFE…IGKFEFEFVD (79 aa)) folds into the OCT domain.

It belongs to the TRAFAC class OBG-HflX-like GTPase superfamily. OBG GTPase family. As to quaternary structure, monomer. The cofactor is Mg(2+).

It is found in the cytoplasm. In terms of biological role, an essential GTPase which binds GTP, GDP and possibly (p)ppGpp with moderate affinity, with high nucleotide exchange rates and a fairly low GTP hydrolysis rate. Plays a role in control of the cell cycle, stress response, ribosome biogenesis and in those bacteria that undergo differentiation, in morphogenesis control. This is GTPase Obg from Streptococcus gordonii (strain Challis / ATCC 35105 / BCRC 15272 / CH1 / DL1 / V288).